Reading from the N-terminus, the 570-residue chain is Probable metalloreductase AIM14 (570 aa).

Residues 1–20 lie on the Extracellular side of the membrane; the sequence is MKESPLITLVKRHSETHFAN. The chain crosses the membrane as a helical span at residues 21–41; sequence IKYGYYVLIISLVYLIGLALL. Residues 42-69 are Cytoplasmic-facing; sequence RAFGRRTPSRSSSAFKNKIIYRLYDIDP. The chain crosses the membrane as a helical span at residues 70–90; sequence AIHLGILFFAVLIPFYYHYSL. The Extracellular portion of the chain corresponds to 91 to 141; the sequence is TTQSTVYLKRLGRLSYALIPLNLFLTLRPNWFLRKNCTYTDFIPFHKWFSR. Positions 101-219 constitute a Ferric oxidoreductase domain; the sequence is LGRLSYALIP…NLVNVAFILL (119 aa). The helical transmembrane segment at 142–162 threads the bilayer; sequence IITVIGLLHGIFFIIKWAIDD. The Cytoplasmic segment spans residues 163–176; sequence NVSLKQKLILKTFN. The helical transmembrane segment at 177-197 threads the bilayer; that stretch reads FAGFIISILVLFLLICSIGPM. Residues 198-373 lie on the Extracellular side of the membrane; it reads RRYNYRLFYI…PEECYSQGTN (176 aa). The FAD-binding FR-type domain maps to 250 to 388; sequence FAKSLMILNK…GGSGISFALP (139 aa). The helical transmembrane segment at 374-394 threads the bilayer; the sequence is IAIICGGSGISFALPLFRHFF. Over 395–570 the chain is Cytoplasmic; sequence NKENVKYLKM…INFVCETYGL (176 aa). The segment covering 480–505 has biased composition (polar residues); it reads ISNFNSENADSNDNTPETSHSPTKEN. Positions 480 to 509 are disordered; it reads ISNFNSENADSNDNTPETSHSPTKENGSMI.

Belongs to the ferric reductase (FRE) family. AIM14 subfamily. In terms of assembly, interacts with ribosomes.

The protein localises to the membrane. Its function is as follows. Probable cell surface metalloreductase. May be involved in iron or copper homeostasis. In Saccharomyces cerevisiae (strain ATCC 204508 / S288c) (Baker's yeast), this protein is Probable metalloreductase AIM14 (AIM14).